Reading from the N-terminus, the 186-residue chain is Elongation factor P (186 aa).

The protein belongs to the elongation factor P family.

It is found in the cytoplasm. It participates in protein biosynthesis; polypeptide chain elongation. In terms of biological role, involved in peptide bond synthesis. Stimulates efficient translation and peptide-bond synthesis on native or reconstituted 70S ribosomes in vitro. Probably functions indirectly by altering the affinity of the ribosome for aminoacyl-tRNA, thus increasing their reactivity as acceptors for peptidyl transferase. The polypeptide is Elongation factor P (Neisseria meningitidis serogroup A / serotype 4A (strain DSM 15465 / Z2491)).